Reading from the N-terminus, the 289-residue chain is Deoxyuridine 5'-triphosphate nucleotidohydrolase (289 aa).

Residues 176 to 178 (RSG) and 283 to 284 (FG) contribute to the substrate site.

This sequence belongs to the dUTPase family. It depends on Mg(2+) as a cofactor.

The enzyme catalyses dUTP + H2O = dUMP + diphosphate + H(+). In terms of biological role, involved in nucleotide metabolism: produces dUMP, the immediate precursor of thymidine nucleotides and decreases the intracellular concentration of dUTP to avoid uracil incorporation into viral DNA. This Equus caballus (Horse) protein is Deoxyuridine 5'-triphosphate nucleotidohydrolase.